Here is a 138-residue protein sequence, read N- to C-terminus: Putative pre-16S rRNA nuclease (138 aa).

It belongs to the YqgF nuclease family.

It localises to the cytoplasm. Functionally, could be a nuclease involved in processing of the 5'-end of pre-16S rRNA. This chain is Putative pre-16S rRNA nuclease, found in Listeria monocytogenes serovar 1/2a (strain ATCC BAA-679 / EGD-e).